Here is a 574-residue protein sequence, read N- to C-terminus: Proline--tRNA ligase (574 aa).

This sequence belongs to the class-II aminoacyl-tRNA synthetase family. ProS type 1 subfamily. In terms of assembly, homodimer.

The protein resides in the cytoplasm. It carries out the reaction tRNA(Pro) + L-proline + ATP = L-prolyl-tRNA(Pro) + AMP + diphosphate. In terms of biological role, catalyzes the attachment of proline to tRNA(Pro) in a two-step reaction: proline is first activated by ATP to form Pro-AMP and then transferred to the acceptor end of tRNA(Pro). As ProRS can inadvertently accommodate and process non-cognate amino acids such as alanine and cysteine, to avoid such errors it has two additional distinct editing activities against alanine. One activity is designated as 'pretransfer' editing and involves the tRNA(Pro)-independent hydrolysis of activated Ala-AMP. The other activity is designated 'posttransfer' editing and involves deacylation of mischarged Ala-tRNA(Pro). The misacylated Cys-tRNA(Pro) is not edited by ProRS. The sequence is that of Proline--tRNA ligase from Nautilia profundicola (strain ATCC BAA-1463 / DSM 18972 / AmH).